A 206-amino-acid chain; its full sequence is Probable nicotinate-nucleotide adenylyltransferase (206 aa).

The protein belongs to the NadD family.

It catalyses the reaction nicotinate beta-D-ribonucleotide + ATP + H(+) = deamido-NAD(+) + diphosphate. Its pathway is cofactor biosynthesis; NAD(+) biosynthesis; deamido-NAD(+) from nicotinate D-ribonucleotide: step 1/1. In terms of biological role, catalyzes the reversible adenylation of nicotinate mononucleotide (NaMN) to nicotinic acid adenine dinucleotide (NaAD). This Gloeobacter violaceus (strain ATCC 29082 / PCC 7421) protein is Probable nicotinate-nucleotide adenylyltransferase.